The chain runs to 145 residues: MRLQSLSSVAIAETRRQIILTIINSLVYLVNFISCPSIHSIPFHISTHLTSCQANISLLKIVGLHCPFHRRGIASLSVCVALHWIAFSCSVMCHFAWSCALPCFVDSFFPSNFFLRTYALFTFSLQLWSGNDLQGNHSYLATPTR.

Transmembrane regions (helical) follow at residues 18-38 and 95-115; these read IILT…CPSI and FAWS…NFFL.

It is found in the membrane. In terms of biological role, has a role in meiosis. This is Meiotically up-regulated gene 124 protein (mug124) from Schizosaccharomyces pombe (strain 972 / ATCC 24843) (Fission yeast).